The chain runs to 398 residues: Tryptophan synthase beta chain (398 aa).

Lys-87 is modified (N6-(pyridoxal phosphate)lysine).

Belongs to the TrpB family. As to quaternary structure, tetramer of two alpha and two beta chains. Pyridoxal 5'-phosphate is required as a cofactor.

The catalysed reaction is (1S,2R)-1-C-(indol-3-yl)glycerol 3-phosphate + L-serine = D-glyceraldehyde 3-phosphate + L-tryptophan + H2O. Its pathway is amino-acid biosynthesis; L-tryptophan biosynthesis; L-tryptophan from chorismate: step 5/5. The beta subunit is responsible for the synthesis of L-tryptophan from indole and L-serine. This Blochmanniella floridana protein is Tryptophan synthase beta chain.